The sequence spans 252 residues: Protein GrpE (252 aa).

The span at 1–22 (MHNPQSRGHNLSQAMSDQTVTN) shows a compositional bias: polar residues. The segment at 1-70 (MHNPQSRGHN…EEDQASEATS (70 aa)) is disordered.

Belongs to the GrpE family. Homodimer.

The protein resides in the cytoplasm. Its function is as follows. Participates actively in the response to hyperosmotic and heat shock by preventing the aggregation of stress-denatured proteins, in association with DnaK and GrpE. It is the nucleotide exchange factor for DnaK and may function as a thermosensor. Unfolded proteins bind initially to DnaJ; upon interaction with the DnaJ-bound protein, DnaK hydrolyzes its bound ATP, resulting in the formation of a stable complex. GrpE releases ADP from DnaK; ATP binding to DnaK triggers the release of the substrate protein, thus completing the reaction cycle. Several rounds of ATP-dependent interactions between DnaJ, DnaK and GrpE are required for fully efficient folding. In Thermosynechococcus vestitus (strain NIES-2133 / IAM M-273 / BP-1), this protein is Protein GrpE.